The chain runs to 384 residues: tRNA-specific 2-thiouridylase MnmA (384 aa).

ATP contacts are provided by residues 21–28 (GMSGGVDS) and M47. The segment at 107-109 (NPD) is interaction with target base in tRNA. C112 serves as the catalytic Nucleophile. C112 and C208 are disulfide-bonded. Residue G136 participates in ATP binding. The tract at residues 158–160 (KDQ) is interaction with tRNA. The Cysteine persulfide intermediate role is filled by C208. Positions 320-321 (RY) are interaction with tRNA.

This sequence belongs to the MnmA/TRMU family.

The protein resides in the cytoplasm. The enzyme catalyses S-sulfanyl-L-cysteinyl-[protein] + uridine(34) in tRNA + AH2 + ATP = 2-thiouridine(34) in tRNA + L-cysteinyl-[protein] + A + AMP + diphosphate + H(+). Catalyzes the 2-thiolation of uridine at the wobble position (U34) of tRNA, leading to the formation of s(2)U34. This Chromohalobacter salexigens (strain ATCC BAA-138 / DSM 3043 / CIP 106854 / NCIMB 13768 / 1H11) protein is tRNA-specific 2-thiouridylase MnmA.